Consider the following 276-residue polypeptide: CTD small phosphatase-like protein (276 aa).

The disordered stretch occupies residues 1–31 (MDGPAIITQVTNPKEDEARSPVAGEKASQRN). Positions 102–260 (LDYGKKCVVI…LDLIPFFEGL (159 aa)) constitute an FCP1 homology domain. D112 serves as the catalytic 4-aspartylphosphate intermediate. Mg(2+)-binding residues include D112, D114, and N223. Catalysis depends on D114, which acts as the Proton donor.

As to quaternary structure, monomer. Interacts with REST. Mg(2+) serves as cofactor.

It localises to the nucleus. It catalyses the reaction O-phospho-L-seryl-[protein] + H2O = L-seryl-[protein] + phosphate. The enzyme catalyses O-phospho-L-threonyl-[protein] + H2O = L-threonyl-[protein] + phosphate. Preferentially catalyzes the dephosphorylation of 'Ser-5' within the tandem 7 residue repeats in the C-terminal domain (CTD) of the largest RNA polymerase II subunit POLR2A. Negatively regulates RNA polymerase II transcription, possibly by controlling the transition from initiation/capping to processive transcript elongation. Recruited by REST to neuronal genes that contain RE-1 elements, leading to neuronal gene silencing in non-neuronal cells. This is CTD small phosphatase-like protein (Ctdspl) from Mus musculus (Mouse).